The chain runs to 1509 residues: DNA polymerase alpha catalytic subunit (1509 aa).

A disordered region spans residues 1-162; the sequence is MNRPKREKKS…KKTKEKKNEI (162 aa). 2 stretches are compositionally biased toward basic and acidic residues: residues 21–35 and 42–79; these read EQIK…RTDQ and ERKR…RETS. Positions 27 to 67 form a coiled coil; that stretch reads RDGEKRTDQLQEEDDERKRLEQLKEQETEFDKEERKRKNRD. Positions 80-123 are enriched in acidic residues; the sequence is DNEDEDEDEDDDGDNSDDDYSLDEDDEDGGGDGENNDSDQEEAI. Basic residues predominate over residues 127–137; sequence RKKKRQVKKKS. A compositionally biased stretch (basic and acidic residues) spans 138 to 147; that stretch reads KKDENGEPKV. Over residues 148–157 the composition is skewed to basic residues; it reads KTPRVKKTKE. Coiled coils occupy residues 234–263 and 958–989; these read APDS…LLNK and LHGL…IQQQ. Zn(2+)-binding residues include Cys1328, Cys1331, Cys1355, Cys1358, Cys1389, Cys1392, Cys1406, and Cys1411. The CysA-type zinc finger occupies 1328-1358; the sequence is CPYCGQNNEFTGIVKIDSEGKSESGFDCNQC. The CysB motif motif lies at 1389-1411; it reads CTECEKVSKNYKETSYRCARPQC.

The protein belongs to the DNA polymerase type-B family.

It localises to the nucleus. It carries out the reaction DNA(n) + a 2'-deoxyribonucleoside 5'-triphosphate = DNA(n+1) + diphosphate. Functionally, polymerase alpha in a complex with DNA primase is a replicative polymerase. This chain is DNA polymerase alpha catalytic subunit (pola1), found in Dictyostelium discoideum (Social amoeba).